The chain runs to 270 residues: Shikimate dehydrogenase (NADP(+)) (270 aa).

Residues 14–16 (SKS) and Thr-61 contribute to the shikimate site. Lys-65 serves as the catalytic Proton acceptor. The shikimate site is built by Asn-86 and Asp-101. NADP(+)-binding positions include 126-130 (GAGGA), 150-155 (NRTVDK), and Met-215. Tyr-217 is a binding site for shikimate. Gly-238 provides a ligand contact to NADP(+).

The protein belongs to the shikimate dehydrogenase family. Homodimer.

It carries out the reaction shikimate + NADP(+) = 3-dehydroshikimate + NADPH + H(+). Its pathway is metabolic intermediate biosynthesis; chorismate biosynthesis; chorismate from D-erythrose 4-phosphate and phosphoenolpyruvate: step 4/7. In terms of biological role, involved in the biosynthesis of the chorismate, which leads to the biosynthesis of aromatic amino acids. Catalyzes the reversible NADPH linked reduction of 3-dehydroshikimate (DHSA) to yield shikimate (SA). The sequence is that of Shikimate dehydrogenase (NADP(+)) from Methylobacillus flagellatus (strain ATCC 51484 / DSM 6875 / VKM B-1610 / KT).